A 541-amino-acid chain; its full sequence is Apolipoprotein N-acyltransferase (541 aa).

Helical transmembrane passes span 21-41 (MSWF…WYSL), 54-74 (LTSL…SWML), 89-109 (VLIS…FFIV), 116-136 (ILWC…YFLC), 157-177 (FGGF…GISF), and 189-209 (YVWL…YEYL). The CN hydrolase domain occupies 219–500 (LRVAVIQPAS…PGVLQVSLPM (282 aa)). Residue E265 is the Proton acceptor of the active site. K350 is an active-site residue. C405 (nucleophile) is an active-site residue. The helical transmembrane segment at 506–526 (LYAFWGDFPMIFLSLLSIGCI) threads the bilayer.

This sequence belongs to the CN hydrolase family. Apolipoprotein N-acyltransferase subfamily.

Its subcellular location is the cell inner membrane. The catalysed reaction is N-terminal S-1,2-diacyl-sn-glyceryl-L-cysteinyl-[lipoprotein] + a glycerophospholipid = N-acyl-S-1,2-diacyl-sn-glyceryl-L-cysteinyl-[lipoprotein] + a 2-acyl-sn-glycero-3-phospholipid + H(+). Its pathway is protein modification; lipoprotein biosynthesis (N-acyl transfer). Catalyzes the phospholipid dependent N-acylation of the N-terminal cysteine of apolipoprotein, the last step in lipoprotein maturation. The protein is Apolipoprotein N-acyltransferase of Chlamydia caviae (strain ATCC VR-813 / DSM 19441 / 03DC25 / GPIC) (Chlamydophila caviae).